The following is a 638-amino-acid chain: Ubiquitin-associated and SH3 domain-containing protein B (638 aa).

Phosphoserine is present on Ser9. Thr12 is subject to Phosphothreonine. The UBA domain maps to 23 to 65 (TVKHGSALDVLLSMGFPRARAQKALASTGGRSVQAACDWLFSH). Residues 243–308 (ANHETLQVIY…PENYITKADE (66 aa)) enclose the SH3 domain. The protein tyrosine phosphatase stretch occupies residues 369 to 638 (GPQKRCLFVC…FNWRETLLQE (270 aa)). Arg379 is an active-site residue. Catalysis depends on His380, which acts as the Tele-phosphohistidine intermediate. Residue His565 is part of the active site.

In terms of assembly, homodimer. Interacts with JAK2 (in vitro). Interacts with CBL. Part of a complex containing CBL and activated EGFR. Interacts with ubiquitin and with mono-ubiquitinated proteins. Interacts with ZAP70 (ubiquitinated form). As to expression, detected in splenic T-cells and B-cells, total spleen, skeletal muscle, heart, lung, kidney, thymus, brain and liver (at protein level). Highly expressed in brain. Detected in heart, spleen, lung, liver, kidney and testis.

The protein resides in the cytoplasm. Its subcellular location is the nucleus. The enzyme catalyses O-phospho-L-tyrosyl-[protein] + H2O = L-tyrosyl-[protein] + phosphate. In terms of biological role, interferes with CBL-mediated down-regulation and degradation of receptor-type tyrosine kinases. Promotes accumulation of activated target receptors, such as T-cell receptors and EGFR, on the cell surface. Exhibits tyrosine phosphatase activity toward several substrates including EGFR, FAK, SYK, and ZAP70. Down-regulates proteins that are dually modified by both protein tyrosine phosphorylation and ubiquitination. This is Ubiquitin-associated and SH3 domain-containing protein B (Ubash3b) from Mus musculus (Mouse).